We begin with the raw amino-acid sequence, 494 residues long: NAD(+) hydrolase ThsA (494 aa).

In terms of domain architecture, Deacetylase sirtuin-type spans 11-295 (ATDKEVLIKE…TILQRYCRSK (285 aa)). Residues alanine 30, aspartate 119, and histidine 157 each coordinate NAD(+). Histidine 157 functions as the Proton acceptor in the catalytic mechanism. Residues 296-494 (ILISGSAVEY…KIITALRAGR (199 aa)) form an SLOG (STALD) domain, binds 3'cADPR region. Residues glycine 300, serine 301, leucine 339, phenylalanine 370, arginine 388, lysine 405, glycine 416, and glutamate 420 each contribute to the 3'cADPR site.

The protein belongs to the soluble Thoeris ThsA family. As to quaternary structure, homotetramer.

The protein localises to the cytoplasm. The catalysed reaction is NAD(+) + H2O = ADP-D-ribose + nicotinamide + H(+). Probably activated by a signal molecule generated by endogenous ThsB1 and/or ThsB2. Can also be activated by the signal generated by ThsB of B.cereus. The activating molecule might be 3' cyclic ADP-D-ribose (3'cADPR). Probable NAD(+) hydrolyzing component (NADase) of the Thoeris antiviral defense system, composed of ThsA, TIR1 (thsB1) and TIR2 (thsB2). Activated by a signal molecule generated by endogenous TIR1, TIR2 or ThsB from B.cereus. After activation it binds and hydrolyzes NAD(+), leading to cell death and inhibition of phage replication. Expression of Thoeris in B.subtilis (strain BEST7003) confers resistance to phages phi29, phi3T, SPBeta, SBSphi11, SBSphi13, SBSphiJ, SPO1 and SPR but not SBSphiC. The TIR paralogs confer overlapping resistance to different phages. This is NAD(+) hydrolase ThsA from Cytobacillus dafuensis (Bacillus dafuensis).